Reading from the N-terminus, the 736-residue chain is Phosphoribosylformylglycinamidine synthase subunit PurL (736 aa).

The active site involves His-50. 2 residues coordinate ATP: Tyr-53 and Lys-92. Position 94 (Glu-94) interacts with Mg(2+). Substrate contacts are provided by residues 95-98 and Arg-117; that span reads SHNH. Catalysis depends on His-96, which acts as the Proton acceptor. Asp-118 is a binding site for Mg(2+). Gln-241 serves as a coordination point for substrate. Residue Asp-269 participates in Mg(2+) binding. 313 to 315 contributes to the substrate binding site; it reads ESQ. ATP contacts are provided by Asp-495 and Gly-532. Asn-533 contributes to the Mg(2+) binding site. Ser-535 is a substrate binding site.

This sequence belongs to the FGAMS family. Monomer. Part of the FGAM synthase complex composed of 1 PurL, 1 PurQ and 2 PurS subunits.

Its subcellular location is the cytoplasm. The catalysed reaction is N(2)-formyl-N(1)-(5-phospho-beta-D-ribosyl)glycinamide + L-glutamine + ATP + H2O = 2-formamido-N(1)-(5-O-phospho-beta-D-ribosyl)acetamidine + L-glutamate + ADP + phosphate + H(+). It functions in the pathway purine metabolism; IMP biosynthesis via de novo pathway; 5-amino-1-(5-phospho-D-ribosyl)imidazole from N(2)-formyl-N(1)-(5-phospho-D-ribosyl)glycinamide: step 1/2. Part of the phosphoribosylformylglycinamidine synthase complex involved in the purines biosynthetic pathway. Catalyzes the ATP-dependent conversion of formylglycinamide ribonucleotide (FGAR) and glutamine to yield formylglycinamidine ribonucleotide (FGAM) and glutamate. The FGAM synthase complex is composed of three subunits. PurQ produces an ammonia molecule by converting glutamine to glutamate. PurL transfers the ammonia molecule to FGAR to form FGAM in an ATP-dependent manner. PurS interacts with PurQ and PurL and is thought to assist in the transfer of the ammonia molecule from PurQ to PurL. In Bartonella quintana (strain Toulouse) (Rochalimaea quintana), this protein is Phosphoribosylformylglycinamidine synthase subunit PurL.